Reading from the N-terminus, the 350-residue chain is MHILRGGRRLISFSCNDYLNLTHHPAVKSAAIAAINLYGAGSGASRLVTGNHPLLVELEERLARIKGTQAACVFGSGYLANTGIVPTLTGAKDLILIDELAHACLFAGTQLSPAKTMVFRHNDVAHAEAILAASRAQYRHALLLTDGVFSMDGDRAPLATLSALCAAHDAWLMSDDAHGLGVIGGGRGSVAAAGDPPVPLQMGTLSKAIGGYGGYLCASAAVIDLMKTRARTVIYSTGLPPASAGAALAALEIIENEPELTAKPLAKARAFCAALGLPEAQSPIVPVIVGAPEAALDASRQLADTGFLVTAIRPPTVPAGTARLRFAFTAGHADEDVARVAQAVRDIVKL.

77–78 (GY) is a binding site for pyridoxal 5'-phosphate. Substrate is bound at residue histidine 102. Residues serine 150, 175 to 178 (DDAH), and 204 to 207 (TLSK) each bind pyridoxal 5'-phosphate. Residue lysine 207 is modified to N6-(pyridoxal phosphate)lysine. Threonine 316 lines the substrate pocket.

Belongs to the class-II pyridoxal-phosphate-dependent aminotransferase family. BioF subfamily. As to quaternary structure, homodimer. Pyridoxal 5'-phosphate serves as cofactor.

The enzyme catalyses 6-carboxyhexanoyl-[ACP] + L-alanine + H(+) = (8S)-8-amino-7-oxononanoate + holo-[ACP] + CO2. Its pathway is cofactor biosynthesis; biotin biosynthesis. In terms of biological role, catalyzes the decarboxylative condensation of pimeloyl-[acyl-carrier protein] and L-alanine to produce 8-amino-7-oxononanoate (AON), [acyl-carrier protein], and carbon dioxide. In Methylocella silvestris (strain DSM 15510 / CIP 108128 / LMG 27833 / NCIMB 13906 / BL2), this protein is 8-amino-7-oxononanoate synthase.